The following is a 324-amino-acid chain: AT-hook motif nuclear-localized protein 24 (324 aa).

Residues 1–12 are compositionally biased toward polar residues; that stretch reads MDPVQSHGSQSS. Disordered regions lie at residues 1–122 and 262–324; these read MDPV…KPPI and MQTP…RPPY. A compositionally biased stretch (low complexity) spans 24-33; it reads LHLQQQQQEF. Positions 69–79 are enriched in polar residues; it reads NIDNIANNSGS. Gly residues predominate over residues 88 to 99; it reads GGSGEGGGGSGG. Residues 105 to 117 constitute a DNA-binding region (a.T hook); that stretch reads RRPRGRPAGSKNK. Positions 129–268 constitute a PPC domain; sequence ANALRTHVME…EDEMQTPVHG (140 aa). The segment covering 280–297 has biased composition (low complexity); the sequence is MMGQQLQHQQQAMSGHQG. Polar residues predominate over residues 304-318; the sequence is GSVQLQQQHDQSYWS.

Its subcellular location is the nucleus. Transcription factor that specifically binds AT-rich DNA sequences related to the nuclear matrix attachment regions (MARs). This Arabidopsis thaliana (Mouse-ear cress) protein is AT-hook motif nuclear-localized protein 24.